Here is a 381-residue protein sequence, read N- to C-terminus: Protein-glutamate methylesterase/protein-glutamine glutaminase (381 aa).

The Response regulatory domain occupies 8-125; the sequence is QVLCIDDSAL…RDGMNEYADQ (118 aa). Residue Asp59 is modified to 4-aspartylphosphate. The CheB-type methylesterase domain occupies 183-375; it reads FSSTEKLIIV…PHVLARLSAH (193 aa). Active-site residues include Ser195, His221, and Asp317.

Belongs to the CheB family. Phosphorylated by CheA. Phosphorylation of the N-terminal regulatory domain activates the methylesterase activity.

The protein localises to the cytoplasm. It carries out the reaction [protein]-L-glutamate 5-O-methyl ester + H2O = L-glutamyl-[protein] + methanol + H(+). The catalysed reaction is L-glutaminyl-[protein] + H2O = L-glutamyl-[protein] + NH4(+). Functionally, involved in chemotaxis. Part of a chemotaxis signal transduction system that modulates chemotaxis in response to various stimuli. Catalyzes the demethylation of specific methylglutamate residues introduced into the chemoreceptors (methyl-accepting chemotaxis proteins or MCP) by CheR. Also mediates the irreversible deamidation of specific glutamine residues to glutamic acid. The protein is Protein-glutamate methylesterase/protein-glutamine glutaminase of Ralstonia nicotianae (strain ATCC BAA-1114 / GMI1000) (Ralstonia solanacearum).